The chain runs to 417 residues: Serpin A3-7 (417 aa).

A signal peptide spans Met-1 to Cys-25. N-linked (GlcNAc...) asparagine glycans are attached at residues Asn-103, Asn-183, Asn-221, and Asn-267.

It belongs to the serpin family. In terms of assembly, homodimer.

The protein resides in the cytoplasmic vesicle. Its subcellular location is the secretory vesicle. It localises to the chromaffin granule. The protein localises to the secreted. In terms of biological role, serine protease inhibitor. The chain is Serpin A3-7 from Bos taurus (Bovine).